Here is a 299-residue protein sequence, read N- to C-terminus: ATP phosphoribosyltransferase (299 aa).

Belongs to the ATP phosphoribosyltransferase family. Long subfamily. Requires Mg(2+) as cofactor.

The protein resides in the cytoplasm. It carries out the reaction 1-(5-phospho-beta-D-ribosyl)-ATP + diphosphate = 5-phospho-alpha-D-ribose 1-diphosphate + ATP. Its pathway is amino-acid biosynthesis; L-histidine biosynthesis; L-histidine from 5-phospho-alpha-D-ribose 1-diphosphate: step 1/9. Feedback inhibited by histidine. In terms of biological role, catalyzes the condensation of ATP and 5-phosphoribose 1-diphosphate to form N'-(5'-phosphoribosyl)-ATP (PR-ATP). Has a crucial role in the pathway because the rate of histidine biosynthesis seems to be controlled primarily by regulation of HisG enzymatic activity. In Campylobacter jejuni subsp. jejuni serotype O:23/36 (strain 81-176), this protein is ATP phosphoribosyltransferase.